The primary structure comprises 364 residues: RNA-binding protein ZC3H11 (364 aa).

Residues 64 to 92 (RYKTKLCKNFVQYGTCPYDIRCMFAHGEE) form a C3H1-type zinc finger. Positions 194 to 199 (VRHNPY) match the MKT1-binding motif motif. Residues 340–364 (EQSQSHLKREGNEGRGEGLHMFLSL) are disordered. Positions 346 to 357 (LKREGNEGRGEG) are enriched in basic and acidic residues.

In terms of assembly, interacts (via MKT1-binding motif) with MKT1. Interacts with PBP1 (via C-terminus); the interaction is direct. In terms of processing, phosphorylated at the N-terminus. CK1.2-dependent phosphorylation may lead to proteasome-dependent degradation of ZC3H11 in absence of stress.

The protein localises to the cytoplasm. Functionally, RNA-binding protein involved in regulation of mRNA stability. Binds AU-rich regions in the 3'-UTR of mRNAs and promotes their stabilization by recruiting a MKT1-containing complex. Stabilizes chaperone mRNAs during stress that causes an accumulation of misfolded or unfolded proteins in the cytoplasm. This Trypanosoma brucei brucei (strain 927/4 GUTat10.1) protein is RNA-binding protein ZC3H11.